We begin with the raw amino-acid sequence, 101 residues long: Large ribosomal subunit protein uL24 (101 aa).

This sequence belongs to the universal ribosomal protein uL24 family. In terms of assembly, part of the 50S ribosomal subunit.

In terms of biological role, one of two assembly initiator proteins, it binds directly to the 5'-end of the 23S rRNA, where it nucleates assembly of the 50S subunit. Functionally, one of the proteins that surrounds the polypeptide exit tunnel on the outside of the subunit. In Streptococcus pyogenes serotype M1, this protein is Large ribosomal subunit protein uL24.